The following is a 61-amino-acid chain: Probable tautomerase SERP0934 (61 aa).

Pro2 (proton acceptor; via imino nitrogen) is an active-site residue.

It belongs to the 4-oxalocrotonate tautomerase family.

The polypeptide is Probable tautomerase SERP0934 (Staphylococcus epidermidis (strain ATCC 35984 / DSM 28319 / BCRC 17069 / CCUG 31568 / BM 3577 / RP62A)).